The following is a 250-amino-acid chain: Ubiquinone/menaquinone biosynthesis C-methyltransferase UbiE (250 aa).

Residues Thr73, Asp94, 122–123, and Ser139 contribute to the S-adenosyl-L-methionine site; that span reads NS.

It belongs to the class I-like SAM-binding methyltransferase superfamily. MenG/UbiE family.

It carries out the reaction a 2-demethylmenaquinol + S-adenosyl-L-methionine = a menaquinol + S-adenosyl-L-homocysteine + H(+). It catalyses the reaction a 2-methoxy-6-(all-trans-polyprenyl)benzene-1,4-diol + S-adenosyl-L-methionine = a 5-methoxy-2-methyl-3-(all-trans-polyprenyl)benzene-1,4-diol + S-adenosyl-L-homocysteine + H(+). The protein operates within quinol/quinone metabolism; menaquinone biosynthesis; menaquinol from 1,4-dihydroxy-2-naphthoate: step 2/2. It functions in the pathway cofactor biosynthesis; ubiquinone biosynthesis. Methyltransferase required for the conversion of demethylmenaquinol (DMKH2) to menaquinol (MKH2) and the conversion of 2-polyprenyl-6-methoxy-1,4-benzoquinol (DDMQH2) to 2-polyprenyl-3-methyl-6-methoxy-1,4-benzoquinol (DMQH2). This chain is Ubiquinone/menaquinone biosynthesis C-methyltransferase UbiE, found in Wigglesworthia glossinidia brevipalpis.